A 241-amino-acid chain; its full sequence is Uridylate kinase (241 aa).

11–14 lines the ATP pocket; sequence KFSG. An involved in allosteric activation by GTP region spans residues 19–24; that stretch reads GENGFG. Gly53 is a binding site for UMP. Positions 54 and 58 each coordinate ATP. UMP is bound by residues Asp74 and 135-142; that span reads TGNPFFTT. ATP-binding residues include Thr162, Tyr168, and Asp171.

Belongs to the UMP kinase family. Homohexamer.

The protein resides in the cytoplasm. The catalysed reaction is UMP + ATP = UDP + ADP. It functions in the pathway pyrimidine metabolism; CTP biosynthesis via de novo pathway; UDP from UMP (UMPK route): step 1/1. With respect to regulation, allosterically activated by GTP. Inhibited by UTP. Functionally, catalyzes the reversible phosphorylation of UMP to UDP. The polypeptide is Uridylate kinase (Wolinella succinogenes (strain ATCC 29543 / DSM 1740 / CCUG 13145 / JCM 31913 / LMG 7466 / NCTC 11488 / FDC 602W) (Vibrio succinogenes)).